A 238-amino-acid chain; its full sequence is Protein E6 (238 aa).

Residues 40 to 51 (KETTTREQKHET) show a composition bias toward basic and acidic residues. 2 disordered regions span residues 40-64 (KETT…EEQE) and 210-238 (EFNE…EFEP). A compositionally biased stretch (acidic residues) spans 227-238 (EEFEESEEEFEP).

It is predominantly expressed in fiber cells.

The protein resides in the secreted. Its subcellular location is the cell wall. The protein is Protein E6 (E6) of Gossypium hirsutum (Upland cotton).